Here is a 125-residue protein sequence, read N- to C-terminus: Evasin P672 (125 aa).

Positions Met1–Ala21 are cleaved as a signal peptide. 8 N-linked (GlcNAc...) asparagine glycosylation sites follow: Asn35, Asn55, Asn65, Asn72, Asn78, Asn104, Asn112, and Asn118. 3 disulfide bridges follow: Cys70/Cys110, Cys87/Cys115, and Cys105/Cys124.

It is found in the secreted. Its function is as follows. Salivary chemokine-binding protein which has chemokine-neutralizing activity and binds to host chemokines CCL1, CCL2, CCL3, CCL3L1, CCL7, CCL8, CCL11, CCL12, CCL13, CCL14, CCL15, CCL16, CCL18 and CCL23. Binds to CCL8 with 1:1 stoichiometry and disrupts CCL8 homodimer formation. The protein is Evasin P672 of Rhipicephalus pulchellus (Yellow backed tick).